We begin with the raw amino-acid sequence, 256 residues long: Ciliary microtubule associated protein 1A (256 aa).

STPGR repeat units lie at residues 66 to 92 (PGPGYLVPSNITVKGKDGTPAYSIYGR), 181 to 206 (PGPGTYRVIDPGSYKHRPPQYSMTAR), and 217 to 242 (PGPGAYSPEKVVMSRPQAPNFSFGIR).

Belongs to the CIMAP family.

The protein resides in the cytoplasm. Its subcellular location is the cytoskeleton. It is found in the flagellum axoneme. Functionally, outer dense fibers are filamentous structures located on the outside of the axoneme in the midpiece and principal piece of the mammalian sperm tail. May help to maintain the passive elastic structures and elastic recoil of the sperm tail. The sequence is that of Ciliary microtubule associated protein 1A (cimap1a) from Xenopus tropicalis (Western clawed frog).